The sequence spans 505 residues: Lysine--tRNA ligase (505 aa).

The Mg(2+) site is built by Glu-415 and Glu-422.

The protein belongs to the class-II aminoacyl-tRNA synthetase family. Homodimer. Mg(2+) serves as cofactor.

The protein resides in the cytoplasm. The enzyme catalyses tRNA(Lys) + L-lysine + ATP = L-lysyl-tRNA(Lys) + AMP + diphosphate. The protein is Lysine--tRNA ligase of Yersinia enterocolitica serotype O:8 / biotype 1B (strain NCTC 13174 / 8081).